A 462-amino-acid polypeptide reads, in one-letter code: Squalene synthase ERG9 (462 aa).

Residues 406 to 426 (AVVLFGVVIAALVCISGLMLG) form a helical membrane-spanning segment.

This sequence belongs to the phytoene/squalene synthase family. It depends on Mg(2+) as a cofactor.

It is found in the endoplasmic reticulum membrane. The protein resides in the microsome. The catalysed reaction is 2 (2E,6E)-farnesyl diphosphate + NADPH + H(+) = squalene + 2 diphosphate + NADP(+). It catalyses the reaction 2 (2E,6E)-farnesyl diphosphate + NADH + H(+) = squalene + 2 diphosphate + NAD(+). The protein operates within terpene metabolism; lanosterol biosynthesis; lanosterol from farnesyl diphosphate: step 1/3. It participates in steroid metabolism; ergosterol biosynthesis. In terms of biological role, squalene synthase; part of the third module of ergosterol biosynthesis pathway that includes the late steps of the pathway. ERG9 produces squalene from 2 farnesyl pyrophosphate moieties. The third module or late pathway involves the ergosterol synthesis itself through consecutive reactions that mainly occur in the endoplasmic reticulum (ER) membrane. Firstly, the squalene synthase ERG9 catalyzes the condensation of 2 farnesyl pyrophosphate moieties to form squalene, which is the precursor of all steroids. Squalene synthase is crucial for balancing the incorporation of farnesyl diphosphate (FPP) into sterol and nonsterol isoprene synthesis. Secondly, squalene is converted into lanosterol by the consecutive action of the squalene epoxidase ERG1 and the lanosterol synthase ERG7. Then, the delta(24)-sterol C-methyltransferase ERG6 methylates lanosterol at C-24 to produce eburicol. Eburicol is the substrate of the sterol 14-alpha demethylase encoded by CYP51A, CYP51B and CYP51C, to yield 4,4,24-trimethyl ergosta-8,14,24(28)-trienol. CYP51B encodes the enzyme primarily responsible for sterol 14-alpha-demethylation, and plays an essential role in ascospore formation. CYP51A encodes an additional sterol 14-alpha-demethylase, induced on ergosterol depletion and responsible for the intrinsic variation in azole sensitivity. The third CYP51 isoform, CYP51C, does not encode a sterol 14-alpha-demethylase, but is required for full virulence on host wheat ears. The C-14 reductase ERG24 then reduces the C14=C15 double bond which leads to 4,4-dimethylfecosterol. A sequence of further demethylations at C-4, involving the C-4 demethylation complex containing the C-4 methylsterol oxidases ERG25, the sterol-4-alpha-carboxylate 3-dehydrogenase ERG26 and the 3-keto-steroid reductase ERG27, leads to the production of fecosterol via 4-methylfecosterol. ERG28 has a role as a scaffold to help anchor ERG25, ERG26 and ERG27 to the endoplasmic reticulum. The C-8 sterol isomerase ERG2 then catalyzes the reaction which results in unsaturation at C-7 in the B ring of sterols and thus converts fecosterol to episterol. The sterol-C5-desaturases ERG3A and ERG3BB then catalyze the introduction of a C-5 double bond in the B ring to produce 5-dehydroepisterol. The C-22 sterol desaturases ERG5A and ERG5B further convert 5-dehydroepisterol into ergosta-5,7,22,24(28)-tetraen-3beta-ol by forming the C-22(23) double bond in the sterol side chain. Finally, ergosta-5,7,22,24(28)-tetraen-3beta-ol is substrate of the C-24(28) sterol reductase ERG4 to produce ergosterol. This Gibberella zeae (strain ATCC MYA-4620 / CBS 123657 / FGSC 9075 / NRRL 31084 / PH-1) (Wheat head blight fungus) protein is Squalene synthase ERG9.